A 357-amino-acid polypeptide reads, in one-letter code: Arginine kinase Cal b 2.0101 (357 aa).

A Phosphagen kinase N-terminal domain is found at 9–91 (KLEEGFKKLE…FDPIIEDYHK (83 aa)). 64 to 68 (GVGVY) serves as a coordination point for L-arginine. The 238-residue stretch at 119 to 356 (FVISTRVRCG…LELIKIEKEM (238 aa)) folds into the Phosphagen kinase C-terminal domain. Residues 122 to 126 (STRVR) and His-185 contribute to the ATP site. A disulfide bond links Cys-201 and Cys-271. An L-arginine-binding site is contributed by Glu-225. Arg-229 contacts ATP. Residue Cys-271 participates in L-arginine binding. ATP contacts are provided by residues 280–284 (RASVH) and 309–314 (RGTRGE). Glu-314 lines the L-arginine pocket.

This sequence belongs to the ATP:guanido phosphotransferase family. As to expression, expressed in chela muscle (at protein level). Expressed in muscle.

It catalyses the reaction L-arginine + ATP = N(omega)-phospho-L-arginine + ADP + H(+). Functionally, catalyzes the reversible transfer of high energy ATP gamma-phosphate group to L-arginine. This Callinectes bellicosus (Warrior swimming crab) protein is Arginine kinase Cal b 2.0101.